Here is a 326-residue protein sequence, read N- to C-terminus: Mitochondrial glycine transporter (326 aa).

Solcar repeat units lie at residues 22 to 106 (SKTT…LRTS), 135 to 216 (SANL…LKRY), and 228 to 312 (SSSS…LILR). 6 consecutive transmembrane segments (helical) span residues 28-53 (FGAG…TRVQ), 81-107 (GTLP…RTSL), 138-163 (LATG…VRYE), 191-214 (GFGA…EQLK), 232-258 (INFV…KTRL), and 287-305 (GLGL…AWTV).

This sequence belongs to the mitochondrial carrier (TC 2.A.29) family. SLC25A38 subfamily.

The protein resides in the mitochondrion inner membrane. It carries out the reaction glycine(in) = glycine(out). Mitochondrial glycine transporter that imports glycine into the mitochondrial matrix. Plays an important role in providing glycine for the first enzymatic step in heme biosynthesis, the condensation of glycine with succinyl-CoA to produce 5-aminolevulinate (ALA) in the mitochondrial matrix. The chain is Mitochondrial glycine transporter from Emericella nidulans (strain FGSC A4 / ATCC 38163 / CBS 112.46 / NRRL 194 / M139) (Aspergillus nidulans).